A 222-amino-acid polypeptide reads, in one-letter code: Cytochrome b6 (222 aa).

A helical transmembrane segment spans residues 39–59 (IFYCLGGITLVCFIIQFATGF). Cysteine 42 is a binding site for heme c. Heme b contacts are provided by histidine 93 and histidine 107. 3 consecutive transmembrane segments (helical) span residues 97-117 (ASMM…TGGF), 123-143 (LTWI…VTGY), and 193-213 (LHTF…FLMI). Heme b-binding residues include histidine 194 and histidine 209.

The protein belongs to the cytochrome b family. PetB subfamily. As to quaternary structure, the 4 large subunits of the cytochrome b6-f complex are cytochrome b6, subunit IV (17 kDa polypeptide, PetD), cytochrome f and the Rieske protein, while the 4 small subunits are PetG, PetL, PetM and PetN. The complex functions as a dimer. Requires heme b as cofactor. The cofactor is heme c.

It is found in the cellular thylakoid membrane. Functionally, component of the cytochrome b6-f complex, which mediates electron transfer between photosystem II (PSII) and photosystem I (PSI), cyclic electron flow around PSI, and state transitions. The chain is Cytochrome b6 from Prochlorothrix hollandica.